The primary structure comprises 277 residues: MALKKYKPITNGRRNMTSLDFAEITKTTPEKSLLQPLPKRAGRNNQGKLTVRHHGGGHKRQYRVIDFKRNKDGINAKVDSIQYDPNRSANIALLVYADGEKRYIIAPKNLKVGQVLESGEEADIKVGNALPLQFIPVGTVIHNIELKPGKGGQIARSAGASAQVLGKEGKYVLIRLRSGEVRMILSTCRATIGQVGNIQHELVNVGKAGRSRWKGIRPTVRGSVMNPNDHPHGGGEGRAPIGRPSPMSPWGKPTLGKKTRRGKKSSDKLIVRGRKKK.

Disordered stretches follow at residues Pro36–Gly55 and Trp213–Lys277.

This sequence belongs to the universal ribosomal protein uL2 family. As to quaternary structure, part of the 50S ribosomal subunit. Forms a bridge to the 30S subunit in the 70S ribosome.

In terms of biological role, one of the primary rRNA binding proteins. Required for association of the 30S and 50S subunits to form the 70S ribosome, for tRNA binding and peptide bond formation. It has been suggested to have peptidyltransferase activity; this is somewhat controversial. Makes several contacts with the 16S rRNA in the 70S ribosome. The protein is Large ribosomal subunit protein uL2 of Staphylococcus saprophyticus subsp. saprophyticus (strain ATCC 15305 / DSM 20229 / NCIMB 8711 / NCTC 7292 / S-41).